The chain runs to 412 residues: Imidazolonepropionase (412 aa).

The Fe(3+) site is built by His76 and His78. 2 residues coordinate Zn(2+): His76 and His78. 3 residues coordinate 4-imidazolone-5-propanoate: Arg85, Tyr148, and His181. An N-formimidoyl-L-glutamate-binding site is contributed by Tyr148. His242 provides a ligand contact to Fe(3+). Zn(2+) is bound at residue His242. Glu245 provides a ligand contact to 4-imidazolone-5-propanoate. Asp317 contacts Fe(3+). Asp317 serves as a coordination point for Zn(2+). Residues Asn319 and Gly321 each coordinate N-formimidoyl-L-glutamate. Ser322 is a 4-imidazolone-5-propanoate binding site.

The protein belongs to the metallo-dependent hydrolases superfamily. HutI family. Zn(2+) serves as cofactor. Fe(3+) is required as a cofactor.

It is found in the cytoplasm. It carries out the reaction 4-imidazolone-5-propanoate + H2O = N-formimidoyl-L-glutamate. It participates in amino-acid degradation; L-histidine degradation into L-glutamate; N-formimidoyl-L-glutamate from L-histidine: step 3/3. Functionally, catalyzes the hydrolytic cleavage of the carbon-nitrogen bond in imidazolone-5-propanoate to yield N-formimidoyl-L-glutamate. It is the third step in the universal histidine degradation pathway. This chain is Imidazolonepropionase, found in Staphylococcus aureus (strain bovine RF122 / ET3-1).